We begin with the raw amino-acid sequence, 261 residues long: MSLPASFDLTAEDAKLLLAANVHLGSKNVIVHNKPYVYKTRPDGVNVINIGKTWEKIVLAARTIAAIPNAADVAVCSSRTFGQRAVLKFAAHTGATPIAGRFTPGNFTNYITRSFKEPRLVIVTDPRTDAQAIKESSYVNIPVIALTDMDSPTDYVDIAIPCNNKGKHSIGLIWWLLAREVLRLRGIIPDRSTEWSVMPDLYFYRDPEEIEQNAAEDSKAEDAEEAPVADAEPDWSGETEDVDWAESGATPAAEEAAASNW.

At serine 2 the chain carries N-acetylserine. Positions 211–261 (EQNAAEDSKAEDAEEAPVADAEPDWSGETEDVDWAESGATPAAEEAAASNW) are disordered. The segment covering 222–244 (DAEEAPVADAEPDWSGETEDVDW) has biased composition (acidic residues). Residues 245 to 261 (AESGATPAAEEAAASNW) show a composition bias toward low complexity.

Belongs to the universal ribosomal protein uS2 family. In terms of assembly, component of the small ribosomal subunit. Mature ribosomes consist of a small (40S) and a large (60S) subunit. The 40S subunit contains about 33 different proteins and 1 molecule of RNA (18S). The 60S subunit contains about 49 different proteins and 3 molecules of RNA (25S, 5.8S and 5S). Interacts with RPS21.

Its subcellular location is the cytoplasm. Its function is as follows. Required for the assembly and/or stability of the 40S ribosomal subunit. Required for the processing of the 20S rRNA-precursor to mature 18S rRNA in a late step of the maturation of 40S ribosomal subunits. This chain is Small ribosomal subunit protein uS2, found in Meyerozyma guilliermondii (strain ATCC 6260 / CBS 566 / DSM 6381 / JCM 1539 / NBRC 10279 / NRRL Y-324) (Yeast).